A 112-amino-acid polypeptide reads, in one-letter code: DNA-binding protein TON_1102 (112 aa).

Belongs to the PDCD5 family.

This is DNA-binding protein TON_1102 from Thermococcus onnurineus (strain NA1).